The primary structure comprises 497 residues: GTPase-activating protein GYP8 (497 aa).

A Rab-GAP TBC domain is found at Phe-69 to Gln-281.

The chain is GTPase-activating protein GYP8 (GYP8) from Saccharomyces cerevisiae (strain ATCC 204508 / S288c) (Baker's yeast).